Reading from the N-terminus, the 74-residue chain is Translation initiation factor IF-1 (74 aa).

The region spanning M1–I72 is the S1-like domain.

Belongs to the IF-1 family. In terms of assembly, component of the 30S ribosomal translation pre-initiation complex which assembles on the 30S ribosome in the order IF-2 and IF-3, IF-1 and N-formylmethionyl-tRNA(fMet); mRNA recruitment can occur at any time during PIC assembly.

The protein resides in the cytoplasm. One of the essential components for the initiation of protein synthesis. Stabilizes the binding of IF-2 and IF-3 on the 30S subunit to which N-formylmethionyl-tRNA(fMet) subsequently binds. Helps modulate mRNA selection, yielding the 30S pre-initiation complex (PIC). Upon addition of the 50S ribosomal subunit IF-1, IF-2 and IF-3 are released leaving the mature 70S translation initiation complex. The chain is Translation initiation factor IF-1 from Mycoplasma capricolum subsp. capricolum (strain California kid / ATCC 27343 / NCTC 10154).